The following is a 401-amino-acid chain: MSALITHDRSTPVTGSLVPYIETPAPAPLQTQQVAGELKDKNGGVSSQGVQLPAPLAVVASQVTEGQQQEITKLLESVTRGTAGSQLISNYVSVLTNFTLASPDTFEIELGKLVSNLEEVRKDIKIADIQRLHEQNMKKIEENQEKIKETEENAKQVKKSGMASKIFGWLIAIASVVIGAIMVASGVGAVAGAMMIASGVIGMANMAVKQAAEDGLISQEAMQVLGPILTAIEVALTVVSTVMTFGGSALKCLADIGAKLGANTASLAAKGAEFSAKVAQISTGISNTVGSAVTKLGGSFGSLTMSHVIRTGSQATQVAVGVGSGITQTINNKKQADLQHNNADLALNKADMAALQSIIDRLKEELSHLSESHRQVMELIFQMINAKGDMLHNLAGRPHTV.

Residues 129–160 (IQRLHEQNMKKIEENQEKIKETEENAKQVKKS) are a coiled coil. The next 2 membrane-spanning stretches (helical) occupy residues 166–186 (IFGW…VASG) and 225–245 (LGPI…VMTF). Positions 345 to 379 (LALNKADMAALQSIIDRLKEELSHLSESHRQVMEL) form a coiled coil.

Belongs to the SctE/SipB/YopB family. The core secretion machinery of the T3SS is composed of approximately 20 different proteins, including cytoplasmic components, a base, an export apparatus and a needle. This subunit is involved in the formation of a pore, called the translocon, in host membrane. Interacts with YopD/SctB. Together with YopD/SctB, forms a multimeric integral membrane complex with a mass of between 500 and 700 kDa.

Its subcellular location is the secreted. It is found in the host membrane. Its function is as follows. Component of the type III secretion system (T3SS), also called injectisome, which is used to inject bacterial effector proteins into eukaryotic host cells. YopB/SctE and YopD/SctB are inserted into the host membrane where they form a pore and allow the translocation of effector proteins into the cytosol of target cells. Is an essential virulence determinant. Required for YopE translocation. Essential for the establishment of Yersinia infections in a mouse model system, but not for the targeting of effector Yops. May modulate the host's immune response at a distance from the site of infection. The polypeptide is Type 3 secretion system translocon protein SctE (Yersinia enterocolitica).